The primary structure comprises 338 residues: MQAQPIHARLMNGEVLSQDDATAFMREVMSGDMSGVRMAAALAALRVRGETPEEIAGFAQAMRESAVTVKVRPRDVLMDVVGTGGDGAHTFNISTTTAFVLAGAGVPIAKHGNRAASSRAGSADVLEALGVNLDASPEVIQEAIDTLGVGFMFARNYHPALRHAAPVRSDLAARTVFNILGPLSNPAGATHLVVGVFRADLTRTLAEALRHLGAKGATVVYGDGLDEFTVCGPNTVSGLRDGEIIDRTMHPEEFGVDLHPKTAIVGGSPAENAEITHALLTGGGTPAQKDIVALNAGAALRTAGRVGTIREGVEQAREVMKGGQGWEMLQKYGALTKR.

5-phospho-alpha-D-ribose 1-diphosphate contacts are provided by residues G82, 85-86 (GD), T90, 92-95 (NIST), 110-118 (KHGNRAASS), and S122. Residue G82 coordinates anthranilate. S94 contributes to the Mg(2+) binding site. Position 113 (N113) interacts with anthranilate. R168 contributes to the anthranilate binding site. Mg(2+) is bound by residues D226 and E227.

Belongs to the anthranilate phosphoribosyltransferase family. In terms of assembly, homodimer. It depends on Mg(2+) as a cofactor.

The enzyme catalyses N-(5-phospho-beta-D-ribosyl)anthranilate + diphosphate = 5-phospho-alpha-D-ribose 1-diphosphate + anthranilate. Its pathway is amino-acid biosynthesis; L-tryptophan biosynthesis; L-tryptophan from chorismate: step 2/5. Its function is as follows. Catalyzes the transfer of the phosphoribosyl group of 5-phosphorylribose-1-pyrophosphate (PRPP) to anthranilate to yield N-(5'-phosphoribosyl)-anthranilate (PRA). The polypeptide is Anthranilate phosphoribosyltransferase (Deinococcus radiodurans (strain ATCC 13939 / DSM 20539 / JCM 16871 / CCUG 27074 / LMG 4051 / NBRC 15346 / NCIMB 9279 / VKM B-1422 / R1)).